A 171-amino-acid chain; its full sequence is Glutamyl-tRNA(Gln) amidotransferase subunit F, mitochondrial (171 aa).

Belongs to the GatF family. In terms of assembly, subunit of the heterotrimeric GatFAB amidotransferase (AdT) complex, composed of A, B and F subunits.

It localises to the mitochondrion inner membrane. It carries out the reaction L-glutamyl-tRNA(Gln) + L-glutamine + ATP + H2O = L-glutaminyl-tRNA(Gln) + L-glutamate + ADP + phosphate + H(+). In terms of biological role, allows the formation of correctly charged Gln-tRNA(Gln) through the transamidation of misacylated Glu-tRNA(Gln) in the mitochondria. The reaction takes place in the presence of glutamine and ATP through an activated gamma-phospho-Glu-tRNA(Gln). Required for proper protein synthesis within the mitochondrion. The protein is Glutamyl-tRNA(Gln) amidotransferase subunit F, mitochondrial of Zygosaccharomyces rouxii (strain ATCC 2623 / CBS 732 / NBRC 1130 / NCYC 568 / NRRL Y-229).